A 184-amino-acid chain; its full sequence is Ras-related protein Rap-1A (184 aa).

GTP-binding positions include 10–18 (GSGGVGKSA), 29–35 (VEKYDPT), Gly-60, and 116–119 (NKCD). The short motif at 32–40 (YDPTIEDSY) is the Effector region element. The residue at position 181 (Cys-181) is a Cysteine methyl ester. Cys-181 carries S-geranylgeranyl cysteine lipidation. A propeptide spans 182 to 184 (LLL) (removed in mature form).

This sequence belongs to the small GTPase superfamily. Ras family. As to quaternary structure, found in a complex, at least composed of ITGB1BP1, KRIT1 and RAP1A. Interacts (active GTP-bound form preferentially) with KRIT1 (via C-terminus FERM domain); the interaction does not induce the opening conformation of KRIT1. Found in a complex composed of CDH1, RAP1A and PKP3; PKP3 acts as a scaffold protein within the complex, the complex is required for CDH1 localization to mature desmosome cell junctions. In its GTP-bound form interacts with PLCE1 and RADIL. Interacts with SGSM1, SGSM2 and SGSM3. Interacts (via GTP-bound active form) with RAPGEF2 (via Ras-associating domain). Interacts with TBC1D21. Interacts with RAP1GDS1.

The protein localises to the cell membrane. It localises to the cytoplasm. The protein resides in the perinuclear region. It is found in the cell junction. Its subcellular location is the early endosome. It carries out the reaction GTP + H2O = GDP + phosphate + H(+). With respect to regulation, activated by guanine nucleotide-exchange factors (GEF) EPAC and EPAC2 in a cAMP-dependent manner, and GFR. Counteracts the mitogenic function of Ras, at least partly because it can interact with Ras GAPs and RAF in a competitive manner. Together with ITGB1BP1, regulates KRIT1 localization to microtubules and membranes. Plays a role in nerve growth factor (NGF)-induced neurite outgrowth. Plays a role in the regulation of embryonic blood vessel formation. Involved in the establishment of basal endothelial barrier function. Facilitates the progressive accumulation of CDH1 at mature desmosome junctions via cAMP-dependent signaling and its interaction with PKP3. May be involved in the regulation of the vascular endothelial growth factor receptor KDR expression at endothelial cell-cell junctions. This is Ras-related protein Rap-1A (RAP1A) from Bos taurus (Bovine).